We begin with the raw amino-acid sequence, 355 residues long: Guanine nucleotide-binding protein G(i) subunit alpha-2 (355 aa).

A lipid anchor (N-myristoyl glycine) is attached at glycine 2. Residue cysteine 3 is the site of S-palmitoyl cysteine attachment. Residues 32-355 (REVKLLLLGA…KNNLKDCGLF (324 aa)) form the G-alpha domain. Positions 35-48 (KLLLLGAGESGKST) are G1 motif. GTP-binding positions include 40–47 (GAGESGKS), 176–182 (LRTRVKT), 201–205 (DVGGQ), 270–273 (NKKD), and alanine 327. Residues serine 47 and threonine 182 each coordinate Mg(2+). Positions 174–182 (DVLRTRVKT) are G2 motif. Residues 197 to 206 (FKMFDVGGQR) form a G3 motif region. The interval 266-273 (ILFLNKKD) is G4 motif. A G5 motif region spans residues 325 to 330 (TCATDT).

Belongs to the G-alpha family. G(i/o/t/z) subfamily. G proteins are composed of 3 units; alpha, beta and gamma. The alpha chain contains the guanine nucleotide binding site. In this context, interacts with GNB2. Interacts with UNC5B. Interacts with GPSM1. Interacts with RGS12 and RGS14. Interacts (inactive GDP-bound form) with NUCB1 (via GBA motif); the interaction leads to activation of GNAI3. Interacts (inactive GDP-bound form) with CCDC88C/DAPLE (via GBA motif). Interacts (inactive GDP-bound form) with CCDC8A/GIV (via GBA motif). Interacts with CXCR1 and CXCR2.

Its subcellular location is the cytoplasm. It localises to the cytoskeleton. The protein resides in the microtubule organizing center. The protein localises to the centrosome. It is found in the cell membrane. Its subcellular location is the membrane. Its function is as follows. Guanine nucleotide-binding proteins (G proteins) are involved as modulators or transducers in various transmembrane signaling systems. The G(i) proteins are involved in hormonal regulation of adenylate cyclase: they inhibit the cyclase in response to beta-adrenergic stimuli. May play a role in cell division. This chain is Guanine nucleotide-binding protein G(i) subunit alpha-2 (GNAI2), found in Canis lupus familiaris (Dog).